Consider the following 71-residue polypeptide: Sec-independent protein translocase protein TatA (71 aa).

Residues 1-21 (MGSFSLLHWLVVLVIVLLVFG) traverse the membrane as a helical segment. The disordered stretch occupies residues 43-71 (LHEDDKPTDQLGSTSQSTASGPQQDHGKH). Over residues 52-65 (QLGSTSQSTASGPQ) the composition is skewed to polar residues.

It belongs to the TatA/E family. As to quaternary structure, the Tat system comprises two distinct complexes: a TatABC complex, containing multiple copies of TatA, TatB and TatC subunits, and a separate TatA complex, containing only TatA subunits. Substrates initially bind to the TatABC complex, which probably triggers association of the separate TatA complex to form the active translocon.

Its subcellular location is the cell inner membrane. Functionally, part of the twin-arginine translocation (Tat) system that transports large folded proteins containing a characteristic twin-arginine motif in their signal peptide across membranes. TatA could form the protein-conducting channel of the Tat system. The protein is Sec-independent protein translocase protein TatA of Xylella fastidiosa (strain M12).